Reading from the N-terminus, the 726-residue chain is Kinesin-like protein KIN-10B (726 aa).

Disordered regions lie at residues 1 to 20, 60 to 82, and 402 to 423; these read MEQQQKQEPGGGGGGVRVVA, AATAAASGRGDGPKDKQQQQQQK, and KNARPGFNNSGVKGGQTPTANR. The 345-residue stretch at 15-359 folds into the Kinesin motor domain; sequence GVRVVARICP…LALASRSSQV (345 aa). Residues 408 to 423 show a composition bias toward polar residues; the sequence is FNNSGVKGGQTPTANR.

This sequence belongs to the TRAFAC class myosin-kinesin ATPase superfamily. Kinesin family. KIN-10 subfamily.

The sequence is that of Kinesin-like protein KIN-10B from Oryza sativa subsp. japonica (Rice).